Consider the following 357-residue polypeptide: Guanine nucleotide-binding protein alpha-1 subunit (357 aa).

Gly-2 carries the N-myristoyl glycine lipid modification. The S-palmitoyl cysteine moiety is linked to residue Cys-4. Residues 32–357 (NVIKLLLLGA…SSKLKGCGLF (326 aa)) enclose the G-alpha domain. Residues 35–48 (KLLLLGAGESGKST) are G1 motif. GTP is bound by residues Glu-43, Ser-44, Gly-45, Lys-46, Ser-47, Thr-48, Asp-151, Leu-176, Thr-182, Gly-204, Asn-270, Lys-271, Asp-273, and Ala-329. A Mg(2+)-binding site is contributed by Ser-47. The tract at residues 174–182 (DILHTRVPT) is G2 motif. Thr-182 contributes to the Mg(2+) binding site. Residues 197–206 (FRVFDVGGQR) are G3 motif. The interval 266-273 (ILFLNKVD) is G4 motif. Residues 327–332 (TCATDT) form a G5 motif region.

It belongs to the G-alpha family. G(q) subfamily. In terms of assembly, g proteins are composed of 3 units; alpha, beta and gamma. The alpha chain contains the guanine nucleotide binding site. The cofactor is Mg(2+).

Guanine nucleotide-binding proteins (G proteins) are involved as modulators or transducers in various transmembrane signaling systems. In Caenorhabditis briggsae, this protein is Guanine nucleotide-binding protein alpha-1 subunit (gpa-1).